The sequence spans 491 residues: Probable cytosol aminopeptidase (491 aa).

2 residues coordinate Mn(2+): Lys264 and Asp269. Lys276 is an active-site residue. The Mn(2+) site is built by Asp287, Asp346, and Glu348. Residue Arg350 is part of the active site.

Belongs to the peptidase M17 family. It depends on Mn(2+) as a cofactor.

Its subcellular location is the cytoplasm. It catalyses the reaction Release of an N-terminal amino acid, Xaa-|-Yaa-, in which Xaa is preferably Leu, but may be other amino acids including Pro although not Arg or Lys, and Yaa may be Pro. Amino acid amides and methyl esters are also readily hydrolyzed, but rates on arylamides are exceedingly low.. The enzyme catalyses Release of an N-terminal amino acid, preferentially leucine, but not glutamic or aspartic acids.. Functionally, presumably involved in the processing and regular turnover of intracellular proteins. Catalyzes the removal of unsubstituted N-terminal amino acids from various peptides. The sequence is that of Probable cytosol aminopeptidase from Xylella fastidiosa (strain 9a5c).